Consider the following 667-residue polypeptide: UvrABC system protein B (667 aa).

The Helicase ATP-binding domain occupies 28-185 (NNFKQGLKEQ…NKLIELKYQR (158 aa)). Position 41–48 (41–48 (GATGTGKT)) interacts with ATP. The short motif at 94–117 (YYDYYQPEAYVASSDTYIEKDSKI) is the Beta-hairpin element. Residues 432-594 (QMDDLYFEIK…VTPTALNKTI (163 aa)) form the Helicase C-terminal domain. Residues 629–664 (NKEIKRLQKTMKEAAKALDFEKAATLRDLILDLEKK) enclose the UVR domain.

The protein belongs to the UvrB family. In terms of assembly, forms a heterotetramer with UvrA during the search for lesions. Interacts with UvrC in an incision complex.

It is found in the cytoplasm. In terms of biological role, the UvrABC repair system catalyzes the recognition and processing of DNA lesions. A damage recognition complex composed of 2 UvrA and 2 UvrB subunits scans DNA for abnormalities. Upon binding of the UvrA(2)B(2) complex to a putative damaged site, the DNA wraps around one UvrB monomer. DNA wrap is dependent on ATP binding by UvrB and probably causes local melting of the DNA helix, facilitating insertion of UvrB beta-hairpin between the DNA strands. Then UvrB probes one DNA strand for the presence of a lesion. If a lesion is found the UvrA subunits dissociate and the UvrB-DNA preincision complex is formed. This complex is subsequently bound by UvrC and the second UvrB is released. If no lesion is found, the DNA wraps around the other UvrB subunit that will check the other stand for damage. The sequence is that of UvrABC system protein B from Aster yellows witches'-broom phytoplasma (strain AYWB).